The primary structure comprises 270 residues: Tryptophan synthase alpha chain (270 aa).

Residues Glu49 and Asp60 each act as proton acceptor in the active site.

It belongs to the TrpA family. Tetramer of two alpha and two beta chains.

It catalyses the reaction (1S,2R)-1-C-(indol-3-yl)glycerol 3-phosphate + L-serine = D-glyceraldehyde 3-phosphate + L-tryptophan + H2O. The protein operates within amino-acid biosynthesis; L-tryptophan biosynthesis; L-tryptophan from chorismate: step 5/5. In terms of biological role, the alpha subunit is responsible for the aldol cleavage of indoleglycerol phosphate to indole and glyceraldehyde 3-phosphate. In Pseudomonas fluorescens (strain Pf0-1), this protein is Tryptophan synthase alpha chain.